The primary structure comprises 139 residues: DNA-directed RNA polymerase II subunit Rpb4 (139 aa).

It belongs to the eukaryotic RPB4 RNA polymerase subunit family. In terms of assembly, RNA polymerase II consists of 12 different subunits.

The protein localises to the nucleus. Its subcellular location is the chromosome. Its function is as follows. DNA-dependent RNA polymerase catalyzes the transcription of DNA into RNA using the four ribonucleoside triphosphates as substrates. Associates with POLR2G. This Drosophila melanogaster (Fruit fly) protein is DNA-directed RNA polymerase II subunit Rpb4.